Here is a 412-residue protein sequence, read N- to C-terminus: Multifunctional CCA protein (412 aa).

Residues Gly8 and Arg11 each contribute to the ATP site. 2 residues coordinate CTP: Gly8 and Arg11. The Mg(2+) site is built by Asp21 and Asp23. Residues Arg91, Arg137, and Arg140 each contribute to the ATP site. 3 residues coordinate CTP: Arg91, Arg137, and Arg140. An HD domain is found at 228-329 (TGIHTLMTLS…VKLFDSIDAW (102 aa)).

It belongs to the tRNA nucleotidyltransferase/poly(A) polymerase family. Bacterial CCA-adding enzyme type 1 subfamily. In terms of assembly, monomer. Can also form homodimers and oligomers. Requires Mg(2+) as cofactor. Ni(2+) serves as cofactor.

It carries out the reaction a tRNA precursor + 2 CTP + ATP = a tRNA with a 3' CCA end + 3 diphosphate. The enzyme catalyses a tRNA with a 3' CCA end + 2 CTP + ATP = a tRNA with a 3' CCACCA end + 3 diphosphate. Its function is as follows. Catalyzes the addition and repair of the essential 3'-terminal CCA sequence in tRNAs without using a nucleic acid template. Adds these three nucleotides in the order of C, C, and A to the tRNA nucleotide-73, using CTP and ATP as substrates and producing inorganic pyrophosphate. tRNA 3'-terminal CCA addition is required both for tRNA processing and repair. Also involved in tRNA surveillance by mediating tandem CCA addition to generate a CCACCA at the 3' terminus of unstable tRNAs. While stable tRNAs receive only 3'-terminal CCA, unstable tRNAs are marked with CCACCA and rapidly degraded. The protein is Multifunctional CCA protein of Escherichia coli O6:K15:H31 (strain 536 / UPEC).